The primary structure comprises 326 residues: MKNIAIIGASGYTGAQLTALIHAEAELTIQGLYVSENSLDKGKPLADLYPSYSHIALTLSPLSDDAKSKIVAEADAVVLATEHSVSLHLAAWFYSQGLAVFDLSGAYRFSDVAQYPKWYGFEHEYPEVLAKAVYGLAEWNAKEIAATKMIAVPGCYPTASLTALKPLVSLLTSAYPVINAVSGVTGAGRKAQLHTSFCEVSLTPYGVLGHRHQPEIATQLGQEVIFTPHLGNFKRGILATITVQLKPGTTTADVAAAYSVYAQAPLVTVKHNQFPKVDDVVLTPNCHLGWKFDENSGYLVVASAIDNLMKGAASQALQCIKIHFNL.

Cys155 is a catalytic residue.

This sequence belongs to the NAGSA dehydrogenase family. Type 1 subfamily.

It is found in the cytoplasm. The enzyme catalyses N-acetyl-L-glutamate 5-semialdehyde + phosphate + NADP(+) = N-acetyl-L-glutamyl 5-phosphate + NADPH + H(+). It functions in the pathway amino-acid biosynthesis; L-arginine biosynthesis; N(2)-acetyl-L-ornithine from L-glutamate: step 3/4. Catalyzes the NADPH-dependent reduction of N-acetyl-5-glutamyl phosphate to yield N-acetyl-L-glutamate 5-semialdehyde. The protein is N-acetyl-gamma-glutamyl-phosphate reductase of Shewanella baltica (strain OS195).